A 353-amino-acid polypeptide reads, in one-letter code: RNA 3'-terminal phosphate cyclase (353 aa).

Residues Q100 and 285 to 289 (HAADQ) contribute to the ATP site. The active-site Tele-AMP-histidine intermediate is H311.

It belongs to the RNA 3'-terminal cyclase family. Type 1 subfamily.

Its subcellular location is the cytoplasm. The catalysed reaction is a 3'-end 3'-phospho-ribonucleotide-RNA + ATP = a 3'-end 2',3'-cyclophospho-ribonucleotide-RNA + AMP + diphosphate. In terms of biological role, catalyzes the conversion of 3'-phosphate to a 2',3'-cyclic phosphodiester at the end of RNA. The mechanism of action of the enzyme occurs in 3 steps: (A) adenylation of the enzyme by ATP; (B) transfer of adenylate to an RNA-N3'P to produce RNA-N3'PP5'A; (C) and attack of the adjacent 2'-hydroxyl on the 3'-phosphorus in the diester linkage to produce the cyclic end product. The biological role of this enzyme is unknown but it is likely to function in some aspects of cellular RNA processing. In Nitrosospira multiformis (strain ATCC 25196 / NCIMB 11849 / C 71), this protein is RNA 3'-terminal phosphate cyclase.